The primary structure comprises 529 residues: Glutamyl-tRNA reductase (529 aa).

Residue 47–50 (TCNR) coordinates substrate. Residue Cys48 is the Nucleophile of the active site. The tract at residues 56-80 (SPRQQAPAPPRPGSAPPPSDEELSR) is disordered. Residues 62-73 (PAPPRPGSAPPP) are compositionally biased toward pro residues. Residues Ser125, 130 to 132 (EPQ), and Gln136 contribute to the substrate site. An NADP(+)-binding site is contributed by 205–210 (GAGDMA). Positions 454–505 (RGAVDGPPTPRSARGAAPPASGARGGGSPRHADPRPQAAEDNGVYARQPGGR) are disordered. The segment covering 464–475 (RSARGAAPPASG) has biased composition (low complexity).

The protein belongs to the glutamyl-tRNA reductase family. As to quaternary structure, homodimer.

It catalyses the reaction (S)-4-amino-5-oxopentanoate + tRNA(Glu) + NADP(+) = L-glutamyl-tRNA(Glu) + NADPH + H(+). It functions in the pathway porphyrin-containing compound metabolism; protoporphyrin-IX biosynthesis; 5-aminolevulinate from L-glutamyl-tRNA(Glu): step 1/2. In terms of biological role, catalyzes the NADPH-dependent reduction of glutamyl-tRNA(Glu) to glutamate 1-semialdehyde (GSA). The polypeptide is Glutamyl-tRNA reductase (Sorangium cellulosum (strain So ce56) (Polyangium cellulosum (strain So ce56))).